The sequence spans 484 residues: MPLSDFQVVIGLEVHAQLLTRSKIFCGCSTAFGGAPNAHTCPVCLGLPGALPALNRAVVEMAVRTGLALGCEIRPKSVFARKNYFYPDLPKGYQISQYELPICEGGEVTFTLEGRDHTARLVRIHMEEDAGKNVHDVSADGASGVDLNRAGVPLVEIVSRPDLRSAEEAVEYLKALRAILMALGVNDGNMQEGSLRCDANVSVMRKGASELGTRCEIKNMNSFRFLKQAIEFEARRQVELIEAGEPVVQETRLFDPDRGETRSMRSKEEAHDYRYFPEPDLPPVIVEAALVERIRGELPELPRARAERYQRRLGLSAYDAGNLVADAAVAAWFDAALGAYGAGPEAAKKVANWVTGELARLANETGEAPAAWKMTPARLAAVLRLVDAGTIGGPGAKQVVEEVFRTGAEPDAVVKAKGLAQVSDEGAIEAAVDKVLAANPGEAEKYRGGRKNLLGFFVGQVMKEMRGKGNPAVVNALLRRKLGD.

This sequence belongs to the GatB/GatE family. GatB subfamily. As to quaternary structure, heterotrimer of A, B and C subunits.

It catalyses the reaction L-glutamyl-tRNA(Gln) + L-glutamine + ATP + H2O = L-glutaminyl-tRNA(Gln) + L-glutamate + ADP + phosphate + H(+). It carries out the reaction L-aspartyl-tRNA(Asn) + L-glutamine + ATP + H2O = L-asparaginyl-tRNA(Asn) + L-glutamate + ADP + phosphate + 2 H(+). Its function is as follows. Allows the formation of correctly charged Asn-tRNA(Asn) or Gln-tRNA(Gln) through the transamidation of misacylated Asp-tRNA(Asn) or Glu-tRNA(Gln) in organisms which lack either or both of asparaginyl-tRNA or glutaminyl-tRNA synthetases. The reaction takes place in the presence of glutamine and ATP through an activated phospho-Asp-tRNA(Asn) or phospho-Glu-tRNA(Gln). This is Aspartyl/glutamyl-tRNA(Asn/Gln) amidotransferase subunit B from Anaeromyxobacter dehalogenans (strain 2CP-1 / ATCC BAA-258).